The following is a 285-amino-acid chain: Pantothenate synthetase (285 aa).

30–37 (MGNLHDGH) lines the ATP pocket. The Proton donor role is filled by H37. Q61 serves as a coordination point for (R)-pantoate. Q61 contacts beta-alanine. 149 to 152 (GEKD) contacts ATP. Q155 lines the (R)-pantoate pocket. ATP is bound by residues I178 and 186-189 (LSSR).

This sequence belongs to the pantothenate synthetase family. Homodimer.

It is found in the cytoplasm. It catalyses the reaction (R)-pantoate + beta-alanine + ATP = (R)-pantothenate + AMP + diphosphate + H(+). It functions in the pathway cofactor biosynthesis; (R)-pantothenate biosynthesis; (R)-pantothenate from (R)-pantoate and beta-alanine: step 1/1. Functionally, catalyzes the condensation of pantoate with beta-alanine in an ATP-dependent reaction via a pantoyl-adenylate intermediate. This Buchnera aphidicola subsp. Acyrthosiphon pisum (strain Tuc7) protein is Pantothenate synthetase.